A 121-amino-acid polypeptide reads, in one-letter code: Large ribosomal subunit protein uL14 (121 aa).

Belongs to the universal ribosomal protein uL14 family. In terms of assembly, part of the 50S ribosomal subunit. Forms a cluster with proteins L3 and L19. In the 70S ribosome, L14 and L19 interact and together make contacts with the 16S rRNA in bridges B5 and B8.

Its function is as follows. Binds to 23S rRNA. Forms part of two intersubunit bridges in the 70S ribosome. The chain is Large ribosomal subunit protein uL14 from Synechococcus elongatus (strain ATCC 33912 / PCC 7942 / FACHB-805) (Anacystis nidulans R2).